Reading from the N-terminus, the 149-residue chain is Large ribosomal subunit protein bL9 (149 aa).

This sequence belongs to the bacterial ribosomal protein bL9 family.

Functionally, binds to the 23S rRNA. The sequence is that of Large ribosomal subunit protein bL9 from Fervidobacterium nodosum (strain ATCC 35602 / DSM 5306 / Rt17-B1).